Consider the following 198-residue polypeptide: Nucleoid occlusion factor SlmA (198 aa).

The 62-residue stretch at 9-70 folds into the HTH tetR-type domain; that stretch reads RNRREEILQA…SLIEFIEDSL (62 aa). The H-T-H motif DNA-binding region spans 33–52; it reads TTAKLAANVGVSEAALYRHF. Residues 117–144 are a coiled coil; the sequence is EQDRLQGRINQLFERIEAQLRQVLKERK.

This sequence belongs to the nucleoid occlusion factor SlmA family. In terms of assembly, homodimer. Interacts with FtsZ.

The protein localises to the cytoplasm. It is found in the nucleoid. In terms of biological role, required for nucleoid occlusion (NO) phenomenon, which prevents Z-ring formation and cell division over the nucleoid. Acts as a DNA-associated cell division inhibitor that binds simultaneously chromosomal DNA and FtsZ, and disrupts the assembly of FtsZ polymers. SlmA-DNA-binding sequences (SBS) are dispersed on non-Ter regions of the chromosome, preventing FtsZ polymerization at these regions. This chain is Nucleoid occlusion factor SlmA, found in Serratia proteamaculans (strain 568).